Here is a 171-residue protein sequence, read N- to C-terminus: Peptide methionine sulfoxide reductase MsrA (171 aa).

The active site involves C13.

Belongs to the MsrA Met sulfoxide reductase family.

It carries out the reaction L-methionyl-[protein] + [thioredoxin]-disulfide + H2O = L-methionyl-(S)-S-oxide-[protein] + [thioredoxin]-dithiol. The enzyme catalyses [thioredoxin]-disulfide + L-methionine + H2O = L-methionine (S)-S-oxide + [thioredoxin]-dithiol. In terms of biological role, has an important function as a repair enzyme for proteins that have been inactivated by oxidation. Catalyzes the reversible oxidation-reduction of methionine sulfoxide in proteins to methionine. The protein is Peptide methionine sulfoxide reductase MsrA of Mycobacterium sp. (strain JLS).